Reading from the N-terminus, the 120-residue chain is Chaperonin GroEL (120 aa).

23-27 (DGTTT) lines the ATP pocket.

Belongs to the chaperonin (HSP60) family. In terms of assembly, forms a cylinder of 14 subunits composed of two heptameric rings stacked back-to-back. Interacts with the co-chaperonin GroES.

It is found in the cytoplasm. The enzyme catalyses ATP + H2O + a folded polypeptide = ADP + phosphate + an unfolded polypeptide.. Together with its co-chaperonin GroES, plays an essential role in assisting protein folding. The GroEL-GroES system forms a nano-cage that allows encapsulation of the non-native substrate proteins and provides a physical environment optimized to promote and accelerate protein folding. The polypeptide is Chaperonin GroEL (Mycobacterium shimoidei).